A 301-amino-acid polypeptide reads, in one-letter code: GTPase Era (301 aa).

The Era-type G domain occupies 7-175 (YCGFIAIVGR…AGIVRKHLPE (169 aa)). The tract at residues 15–22 (GRPNVGKS) is G1. 15-22 (GRPNVGKS) provides a ligand contact to GTP. Residues 41–45 (QTTRH) form a G2 region. Residues 62–65 (DTPG) form a G3 region. GTP contacts are provided by residues 62–66 (DTPGL) and 124–127 (NKVD). The G4 stretch occupies residues 124–127 (NKVD). Residues 154 to 156 (LSA) are G5. One can recognise a KH type-2 domain in the interval 198-283 (IREKLMRFLG…HLELWVKVKS (86 aa)).

This sequence belongs to the TRAFAC class TrmE-Era-EngA-EngB-Septin-like GTPase superfamily. Era GTPase family. As to quaternary structure, monomer.

The protein resides in the cytoplasm. It is found in the cell inner membrane. Functionally, an essential GTPase that binds both GDP and GTP, with rapid nucleotide exchange. Plays a role in 16S rRNA processing and 30S ribosomal subunit biogenesis and possibly also in cell cycle regulation and energy metabolism. The chain is GTPase Era from Enterobacter sp. (strain 638).